We begin with the raw amino-acid sequence, 499 residues long: Dual specificity protein kinase CLK2 (499 aa).

Residues 1 to 65 are disordered; the sequence is MPHPRRYHSS…RSSYDDHSSD (65 aa). A compositionally biased stretch (basic and acidic residues) spans 8–23; sequence HSSERGSRGSYHEHYQ. Positions 24–33 are enriched in basic residues; sequence SRKHKRRRSR. Serine 34 carries the phosphoserine; by PKB/AKT1 modification. Over residues 47-65 the composition is skewed to basic and acidic residues; that stretch reads REDSYHVRSRSSYDDHSSD. Residue serine 98 is modified to Phosphoserine; by autocatalysis. At tyrosine 99 the chain carries Phosphotyrosine; by autocatalysis. Residues 102 to 142 are disordered; sequence HRENSSYRSQRSSRRKHRRRRRRSRTFSRSSSHSSRRAKSV. The segment covering 112 to 127 has biased composition (basic residues); that stretch reads RSSRRKHRRRRRRSRT. Threonine 127 carries the post-translational modification Phosphothreonine; by PKB/AKT1. Serine 141 is modified (phosphoserine; by autocatalysis). Phosphotyrosine is present on tyrosine 152. Positions 163 to 479 constitute a Protein kinase domain; it reads EIVSTLGEGT…GEALQHPFFA (317 aa). Residues 168–176 and lysine 192 each bind ATP; that span reads LGEGTFGRV. Aspartate 289 functions as the Proton acceptor in the catalytic mechanism. A Phosphothreonine; by PKB/AKT2 modification is found at threonine 343.

Belongs to the protein kinase superfamily. CMGC Ser/Thr protein kinase family. Lammer subfamily. Interacts with RBMX and UBL5. Interacts with AKT1. Post-translationally, autophosphorylates on all three types of residues. Phosphorylation on Ser-34 and Thr-127 by AKT1 is induced by ionizing radiation or insulin. Phosphorylation plays a critical role in cell proliferation following low dose radiation and prevents cell death following high dose radiation. Phosphorylation at Thr-343 by PKB/AKT2 induces its kinase activity which is required for its stability. The phosphorylation status at Ser-141 influences its subnuclear localization; inhibition of phosphorylation at Ser-141 results in accumulation in the nuclear speckle.

Its subcellular location is the nucleus. It is found in the nucleus speckle. The catalysed reaction is L-seryl-[protein] + ATP = O-phospho-L-seryl-[protein] + ADP + H(+). It catalyses the reaction L-threonyl-[protein] + ATP = O-phospho-L-threonyl-[protein] + ADP + H(+). It carries out the reaction L-tyrosyl-[protein] + ATP = O-phospho-L-tyrosyl-[protein] + ADP + H(+). Its activity is regulated as follows. 5,6-dichloro-1-b-D-ribofuranosylbenzimidazole (DRB) inhibits autophosphorylation. TG003 inhibits its kinase activity and affects the regulation of alternative splicing mediated by phosphorylation of SR proteins. Dual specificity kinase acting on both serine/threonine and tyrosine-containing substrates. Phosphorylates serine- and arginine-rich (SR) proteins of the spliceosomal complex. May be a constituent of a network of regulatory mechanisms that enable SR proteins to control RNA splicing and can cause redistribution of SR proteins from speckles to a diffuse nucleoplasmic distribution. Acts as a suppressor of hepatic gluconeogenesis and glucose output by repressing PPARGC1A transcriptional activity on gluconeogenic genes via its phosphorylation. Phosphorylates PPP2R5B thereby stimulating the assembly of PP2A phosphatase with the PPP2R5B-AKT1 complex leading to dephosphorylation of AKT1. Phosphorylates: PTPN1, SRSF1 and SRSF3. Regulates the alternative splicing of tissue factor (F3) pre-mRNA in endothelial cells. Phosphorylates PAGE4 at several serine and threonine residues and this phosphorylation attenuates the ability of PAGE4 to potentiate the transcriptional activator activity of JUN. The protein is Dual specificity protein kinase CLK2 (Clk2) of Mus musculus (Mouse).